Here is a 355-residue protein sequence, read N- to C-terminus: F-box only protein 32 (355 aa).

A Nuclear localization signal motif is present at residues 62–67; that stretch reads KKRKKD. The Nuclear export signal motif lies at 169 to 173; the sequence is LLQTL. One can recognise an F-box domain in the interval 223 to 271; that stretch reads LTFTDLPLCLQLNIMQRLSDGRDLVSLGQVAPDLHVLSEDRLLWKKLCQ. Residues 280–295 carry the Bipartite nuclear localization signal motif; the sequence is RKRLILSDKGQLDWKK.

As to quaternary structure, part of the SCF (SKP1-CUL1-F-box) E3 ubiquitin-protein ligase complex SCF(FBXO32) formed of CUL1, SKP1, RBX1 and FBXO32.

Its subcellular location is the cytoplasm. The protein localises to the nucleus. The protein operates within protein modification; protein ubiquitination. In terms of biological role, substrate recognition component of a SCF (SKP1-CUL1-F-box protein) E3 ubiquitin-protein ligase complex which mediates the ubiquitination and subsequent proteasomal degradation of target proteins. Probably recognizes and binds to phosphorylated target proteins during skeletal muscle atrophy. Recognizes TERF1. The sequence is that of F-box only protein 32 (FBXO32) from Bos taurus (Bovine).